A 176-amino-acid polypeptide reads, in one-letter code: Dual-action ribosomal maturation protein DarP (176 aa).

Residues 1–10 (MTVPNHQQDI) are compositionally biased toward polar residues. Residues 1–22 (MTVPNHQQDISDSDLESRPSKT) are disordered.

The protein belongs to the DarP family.

Its subcellular location is the cytoplasm. In terms of biological role, member of a network of 50S ribosomal subunit biogenesis factors which assembles along the 30S-50S interface, preventing incorrect 23S rRNA structures from forming. Promotes peptidyl transferase center (PTC) maturation. The polypeptide is Dual-action ribosomal maturation protein DarP (Nitrosomonas eutropha (strain DSM 101675 / C91 / Nm57)).